The primary structure comprises 165 residues: Phosphopantetheine adenylyltransferase (165 aa).

Threonine 9 contacts substrate. ATP-binding positions include 9-10 (TF) and histidine 17. Substrate contacts are provided by lysine 41, leucine 73, and arginine 87. Residues 88 to 90 (GLR), glutamate 98, and 123 to 129 (LQPIASR) each bind ATP.

This sequence belongs to the bacterial CoaD family. Homohexamer. The cofactor is Mg(2+).

It is found in the cytoplasm. It carries out the reaction (R)-4'-phosphopantetheine + ATP + H(+) = 3'-dephospho-CoA + diphosphate. It participates in cofactor biosynthesis; coenzyme A biosynthesis; CoA from (R)-pantothenate: step 4/5. Functionally, reversibly transfers an adenylyl group from ATP to 4'-phosphopantetheine, yielding dephospho-CoA (dPCoA) and pyrophosphate. In Rhizorhabdus wittichii (strain DSM 6014 / CCUG 31198 / JCM 15750 / NBRC 105917 / EY 4224 / RW1) (Sphingomonas wittichii), this protein is Phosphopantetheine adenylyltransferase.